A 509-amino-acid chain; its full sequence is Heat shock 70 kDa protein 14 (509 aa).

This sequence belongs to the heat shock protein 70 family. In terms of assembly, component of ribosome-associated complex (RAC), a heterodimer composed of Hsp70/DnaK-type chaperone HSPA14 and Hsp40/DnaJ-type chaperone DNAJC2.

The protein localises to the cytoplasm. Its subcellular location is the cytosol. Functionally, component of the ribosome-associated complex (RAC), a complex involved in folding or maintaining nascent polypeptides in a folding-competent state. In the RAC complex, binds to the nascent polypeptide chain, while DNAJC2 stimulates its ATPase activity. The sequence is that of Heat shock 70 kDa protein 14 (Hspa14) from Rattus norvegicus (Rat).